The following is a 71-amino-acid chain: UPF0435 protein BLi00816/BL03111 (71 aa).

Belongs to the UPF0435 family.

This is UPF0435 protein BLi00816/BL03111 from Bacillus licheniformis (strain ATCC 14580 / DSM 13 / JCM 2505 / CCUG 7422 / NBRC 12200 / NCIMB 9375 / NCTC 10341 / NRRL NRS-1264 / Gibson 46).